We begin with the raw amino-acid sequence, 761 residues long: Translational repressor ifet-1 (761 aa).

Disordered stretches follow at residues 101 to 274, 386 to 446, 557 to 592, 681 to 702, and 730 to 761; these read SPQR…SSGG, KGME…QHLH, VQRQLQKSSSNADQKKEKTSQSPPESNQETSDAHNQ, QQAQMANMQERQGPSHNQQQHQ, and GSQFTGSGDRIPSSVRPMSLEDLEKQLTAVPK. 3 stretches are compositionally biased toward basic and acidic residues: residues 114–128, 164–189, and 212–222; these read PTDDKGRDGEYERLG, RGTRGAEWKKDTTRGAKFAPRREERL, and IELRGFDEPKK. Polar residues-rich tracts occupy residues 400–410, 557–568, 576–592, and 690–702; these read QDPSQQAQLLQ, VQRQLQKSSSNA, SQSPPESNQETSDAHNQ, and ERQGPSHNQQQHQ.

As to quaternary structure, interacts with cgh-1. Interacts with ife-1 and oma-1. In terms of tissue distribution, in the embryo, significantly enriched in the germ cell lineage.

The protein resides in the cytoplasm. Involved in translational repression of multiple mRNAs in the distal gonad. Recruited to the 3' untranslated region (UTR) of zif-1 by oma-1 and is required for translational repression of zif-1. May also be involved in translational repression of mei-1 through recruitment to the mei-1 3' UTR by oma-1. Required for oogenesis but not spermatogenesis, for P granule formation and for the localization of car-1 and cgh-1 to P granules. Required for normal spindle orientation in early embryos. The chain is Translational repressor ifet-1 from Caenorhabditis elegans.